The following is a 439-amino-acid chain: tRNA(Ile)-lysidine synthase (439 aa).

An ATP-binding site is contributed by 23–28 (SGGLDS).

It belongs to the tRNA(Ile)-lysidine synthase family.

It is found in the cytoplasm. It catalyses the reaction cytidine(34) in tRNA(Ile2) + L-lysine + ATP = lysidine(34) in tRNA(Ile2) + AMP + diphosphate + H(+). Functionally, ligates lysine onto the cytidine present at position 34 of the AUA codon-specific tRNA(Ile) that contains the anticodon CAU, in an ATP-dependent manner. Cytidine is converted to lysidine, thus changing the amino acid specificity of the tRNA from methionine to isoleucine. This is tRNA(Ile)-lysidine synthase from Methylococcus capsulatus (strain ATCC 33009 / NCIMB 11132 / Bath).